We begin with the raw amino-acid sequence, 201 residues long: Small ribosomal subunit protein uS4 (201 aa).

The disordered stretch occupies residues 1 to 46 (MARYTGPRSRISRRFGEPVMGDSKALQKKNYAPGMHGRNKKRKQSE). One can recognise an S4 RNA-binding domain in the interval 92–151 (ARLDNTVYRLGIASSRRAARQLVIHKHIVVNGDVVNIPSYQLKPGDQLGVREKSKSIEAI).

This sequence belongs to the universal ribosomal protein uS4 family. In terms of assembly, part of the 30S ribosomal subunit. Contacts protein S5. The interaction surface between S4 and S5 is involved in control of translational fidelity.

Functionally, one of the primary rRNA binding proteins, it binds directly to 16S rRNA where it nucleates assembly of the body of the 30S subunit. Its function is as follows. With S5 and S12 plays an important role in translational accuracy. The polypeptide is Small ribosomal subunit protein uS4 (Cytophaga hutchinsonii (strain ATCC 33406 / DSM 1761 / CIP 103989 / NBRC 15051 / NCIMB 9469 / D465)).